The following is a 609-amino-acid chain: Probable translation initiation factor IF-2 (609 aa).

The 219-residue stretch at 12-230 (LRQPIVAVLG…VLAGLAQRYM (219 aa)) folds into the tr-type G domain. The segment at 21-28 (GHVDHGKT) is G1. 21 to 28 (GHVDHGKT) contacts GTP. Positions 46–50 (QITQH) are G2. Residues 86–89 (DTPG) form a G3 region. Residues 86–90 (DTPGH) and 140–143 (NKID) contribute to the GTP site. A G4 region spans residues 140–143 (NKID). The G5 stretch occupies residues 208–210 (SAK).

This sequence belongs to the TRAFAC class translation factor GTPase superfamily. Classic translation factor GTPase family. IF-2 subfamily.

Function in general translation initiation by promoting the binding of the formylmethionine-tRNA to ribosomes. Seems to function along with eIF-2. In Ignicoccus hospitalis (strain KIN4/I / DSM 18386 / JCM 14125), this protein is Probable translation initiation factor IF-2.